The following is a 481-amino-acid chain: WASH complex subunit 1 (481 aa).

A required for WASH complex assembly region spans residues 1–54 (MVRMTQKRYLEGQVYSVPLIQPDLRREEAVHQITDALQYLEMISTDIFTRVSES). Disordered stretches follow at residues 273 to 417 (SVPA…SGGD) and 429 to 481 (RRKG…DWEA). Over residues 304–341 (APPPPPPPPPPPPEPTHVPVPPPGTSAAPPPPPPPPPM) the composition is skewed to pro residues. The interval 359–481 (KGAPSEVVQP…AADDEDDWEA (123 aa)) is VCA. Residues 371 to 393 (GRASLLESIRNAGGIGKANLRNV) enclose the WH2 domain. The span at 392 to 407 (NVKERKMEKKKQKEQE) shows a compositional bias: basic and acidic residues.

It belongs to the WASH1 family. Component of the WASH complex.

The protein localises to the early endosome membrane. Its subcellular location is the recycling endosome membrane. In terms of biological role, acts as a nucleation-promoting factor at the surface of endosomes, where it recruits and activates the Arp2/3 complex to induce actin polymerization, playing a key role in the fission of tubules that serve as transport intermediates during endosome sorting. The polypeptide is WASH complex subunit 1 (Danio rerio (Zebrafish)).